A 781-amino-acid chain; its full sequence is Phenylalanine--tRNA ligase beta subunit (781 aa).

A tRNA-binding domain is found at 39–147 (APPFNDVVVA…DDAPVGEDLR (109 aa)). The B5 domain occupies 398 to 473 (PRREPIELRL…RLFGYDRIPA (76 aa)). Residues Asp-451, Asp-457, Glu-460, and Glu-461 each coordinate Mg(2+). An FDX-ACB domain is found at 687–780 (SRFPQVRRDL…AARRCSATLR (94 aa)).

It belongs to the phenylalanyl-tRNA synthetase beta subunit family. Type 1 subfamily. In terms of assembly, tetramer of two alpha and two beta subunits. It depends on Mg(2+) as a cofactor.

The protein resides in the cytoplasm. The catalysed reaction is tRNA(Phe) + L-phenylalanine + ATP = L-phenylalanyl-tRNA(Phe) + AMP + diphosphate + H(+). In Thiobacillus denitrificans (strain ATCC 25259 / T1), this protein is Phenylalanine--tRNA ligase beta subunit.